Consider the following 392-residue polypeptide: Succinate--CoA ligase [ADP-forming] subunit beta (392 aa).

One can recognise an ATP-grasp domain in the interval lysine 9–lysine 248. ATP is bound by residues lysine 50, glycine 57 to glycine 59, valine 106, and glutamate 111. Mg(2+) is bound by residues asparagine 203 and aspartate 217. Substrate contacts are provided by residues asparagine 268 and glycine 325–valine 327.

It belongs to the succinate/malate CoA ligase beta subunit family. As to quaternary structure, heterotetramer of two alpha and two beta subunits. Mg(2+) is required as a cofactor.

It carries out the reaction succinate + ATP + CoA = succinyl-CoA + ADP + phosphate. The catalysed reaction is GTP + succinate + CoA = succinyl-CoA + GDP + phosphate. The protein operates within carbohydrate metabolism; tricarboxylic acid cycle; succinate from succinyl-CoA (ligase route): step 1/1. Succinyl-CoA synthetase functions in the citric acid cycle (TCA), coupling the hydrolysis of succinyl-CoA to the synthesis of either ATP or GTP and thus represents the only step of substrate-level phosphorylation in the TCA. The beta subunit provides nucleotide specificity of the enzyme and binds the substrate succinate, while the binding sites for coenzyme A and phosphate are found in the alpha subunit. This Salinibacter ruber (strain DSM 13855 / M31) protein is Succinate--CoA ligase [ADP-forming] subunit beta.